The following is a 701-amino-acid chain: MSLKLNTPFPIFAPSLFPNHNPRAPSEIRFSRWGNANAERFEQRRRSQEELEAEIRRDRRFDAATKIVHTHDSEAAAAEPKTSPFRSRGTPSLPSARSIPGRRSKYSKPDSGPNRPKNKPRVPDSPPQLDAKPEVKLSEDGLTYVINGAPFEFKYSYTETPKVKPLKLREPAYAPFGPTTMGRPWTGRAPLPQSQKTPREFDSFRLPPVGKKGLKPVQKPGPFRPGVGPRYVYSKEEILGEPLTKEEVRELVTSCLKTTRQLNMGRDGLTHNMLNNIHDLWKRRRVCKIKCKGVCTVDMDNVCEQLEEKIGGKVIYRRGGVLFLFRGRNYNHRTRPRFPLMLWKPVAPVYPRLIQQVPEGLTRQEATNMRRKGRELMPICKLGKNGVYCDLVKNVKEAFEVCELVRIDCQGMKGSDFRKIGAKLKDLVPCVLVSFENEQILIWRGREWKSSLTTPDKKGDILEDIEVDTALPEDDEPSVSPNQSQTMTQNPPLDSMELQNDPDGHDLSPSTVDSSEMEGTINSLQSWSTKDVTEPTVDSFLRDLEEPEDEPETSEEISKQSIERVLILMKQAVESGTALVLDAADLDADTVFSKAVAFSSVASPGPVFQHGLRKQPTVKKQESQEFGYGDLEAKSSNVVVSRNASKSSNVVVFGKREVAERGEREEKEEGSKKKMDEFAEDYREVMPHGTLKVDELAKLLA.

A chloroplast-targeting transit peptide spans 1 to 37; that stretch reads MSLKLNTPFPIFAPSLFPNHNPRAPSEIRFSRWGNAN. 2 disordered regions span residues 68-136 and 191-221; these read VHTH…PEVK and LPQS…QKPG. 2 CRM domains span residues 241–337 and 359–455; these read EPLT…TRPR and EGLT…LTTP. Positions 471–532 are disordered; it reads LPEDDEPSVS…SLQSWSTKDV (62 aa). Composition is skewed to polar residues over residues 479–492 and 520–530; these read VSPN…QNPP and TINSLQSWSTK. The tract at residues 564–586 is CRS2 binding; that stretch reads RVLILMKQAVESGTALVLDAADL.

As to quaternary structure, interacts with CRS2 and RNA. Part of large ribonucleo-protein complexes that include group IIB introns, CRS2 and CAF1.

The protein resides in the plastid. It is found in the chloroplast stroma. In terms of biological role, required for the splicing of group IIB introns in chloroplasts. Forms splicing particles with CRS2. Interacts with RNA and confers intron specificity of the splicing particles. This Arabidopsis thaliana (Mouse-ear cress) protein is CRS2-associated factor 1, chloroplastic.